A 498-amino-acid chain; its full sequence is Isocitrate dehydrogenase [NADP], mitochondrial (498 aa).

Residues 164–166 and Arg171 each bind NADP(+); that span reads TIT. Thr166 lines the substrate pocket. Substrate contacts are provided by residues 183–189, Arg198, and Arg221; that span reads SPNGTIR. Asp339 lines the Mn(2+) pocket. Lys347 serves as a coordination point for NADP(+). Asp362 is a binding site for Mn(2+). NADP(+)-binding positions include 397 to 402 and Asn415; that span reads GTVTRH.

It belongs to the isocitrate and isopropylmalate dehydrogenases family. Requires Mg(2+) as cofactor. It depends on Mn(2+) as a cofactor.

The protein resides in the mitochondrion. The catalysed reaction is D-threo-isocitrate + NADP(+) = 2-oxoglutarate + CO2 + NADPH. The chain is Isocitrate dehydrogenase [NADP], mitochondrial (icdA) from Aspergillus niger.